A 375-amino-acid chain; its full sequence is Alcohol dehydrogenase 1 (375 aa).

Ser-2 bears the N-acetylserine mark. The Zn(2+) site is built by Cys-47, His-68, Cys-98, Cys-101, Cys-104, Cys-112, and Cys-175. NAD(+) contacts are provided by residues 200-205, Asp-224, and Lys-229; that span reads WSGRVG. Lys-234 bears the N6-succinyllysine mark. 293–295 lines the NAD(+) pocket; that stretch reads VGV. At Lys-340 the chain carries N6-succinyllysine. Arg-370 is a binding site for NAD(+).

The protein belongs to the zinc-containing alcohol dehydrogenase family. Class-I subfamily. As to quaternary structure, homodimer. Zn(2+) is required as a cofactor.

It localises to the cytoplasm. The enzyme catalyses a primary alcohol + NAD(+) = an aldehyde + NADH + H(+). The catalysed reaction is a secondary alcohol + NAD(+) = a ketone + NADH + H(+). This is Alcohol dehydrogenase 1 (ADH1) from Geomys attwateri (Attwater's pocket gopher).